The primary structure comprises 510 residues: 2-isopropylmalate synthase (510 aa).

The region spanning leucine 5 to valine 267 is the Pyruvate carboxyltransferase domain. Aspartate 14, histidine 202, histidine 204, and asparagine 238 together coordinate Mn(2+). The interval arginine 392–valine 510 is regulatory domain.

The protein belongs to the alpha-IPM synthase/homocitrate synthase family. LeuA type 1 subfamily. As to quaternary structure, homodimer. The cofactor is Mn(2+).

Its subcellular location is the cytoplasm. The enzyme catalyses 3-methyl-2-oxobutanoate + acetyl-CoA + H2O = (2S)-2-isopropylmalate + CoA + H(+). It participates in amino-acid biosynthesis; L-leucine biosynthesis; L-leucine from 3-methyl-2-oxobutanoate: step 1/4. In terms of biological role, catalyzes the condensation of the acetyl group of acetyl-CoA with 3-methyl-2-oxobutanoate (2-ketoisovalerate) to form 3-carboxy-3-hydroxy-4-methylpentanoate (2-isopropylmalate). The protein is 2-isopropylmalate synthase of Nitrosomonas eutropha (strain DSM 101675 / C91 / Nm57).